A 2090-amino-acid polypeptide reads, in one-letter code: Nuclear pore complex protein Nup205 (2090 aa).

It belongs to the NUP186/NUP192/NUP205 family. Part of the nuclear pore complex (NPC).

It is found in the nucleus. Its subcellular location is the nuclear pore complex. In terms of biological role, plays a role in the nuclear pore complex (NPC) assembly and maintenance, but with limited role in NPC permeability. Required for specific nuclear import pathways such as Mad import. In Drosophila melanogaster (Fruit fly), this protein is Nuclear pore complex protein Nup205.